Here is a 379-residue protein sequence, read N- to C-terminus: Queuine tRNA-ribosyltransferase (379 aa).

Asp-94 functions as the Proton acceptor in the catalytic mechanism. Residues 94–98 (DSGGF), Asp-148, Gln-191, and Gly-218 contribute to the substrate site. An RNA binding region spans residues 249–255 (GVGSPDA). Asp-268 (nucleophile) is an active-site residue. The RNA binding; important for wobble base 34 recognition stretch occupies residues 273–277 (TRIAR). Zn(2+) is bound by residues Cys-306, Cys-308, Cys-311, and His-337.

It belongs to the queuine tRNA-ribosyltransferase family. As to quaternary structure, homodimer. Within each dimer, one monomer is responsible for RNA recognition and catalysis, while the other monomer binds to the replacement base PreQ1. Requires Zn(2+) as cofactor.

It carries out the reaction 7-aminomethyl-7-carbaguanine + guanosine(34) in tRNA = 7-aminomethyl-7-carbaguanosine(34) in tRNA + guanine. It participates in tRNA modification; tRNA-queuosine biosynthesis. In terms of biological role, catalyzes the base-exchange of a guanine (G) residue with the queuine precursor 7-aminomethyl-7-deazaguanine (PreQ1) at position 34 (anticodon wobble position) in tRNAs with GU(N) anticodons (tRNA-Asp, -Asn, -His and -Tyr). Catalysis occurs through a double-displacement mechanism. The nucleophile active site attacks the C1' of nucleotide 34 to detach the guanine base from the RNA, forming a covalent enzyme-RNA intermediate. The proton acceptor active site deprotonates the incoming PreQ1, allowing a nucleophilic attack on the C1' of the ribose to form the product. After dissociation, two additional enzymatic reactions on the tRNA convert PreQ1 to queuine (Q), resulting in the hypermodified nucleoside queuosine (7-(((4,5-cis-dihydroxy-2-cyclopenten-1-yl)amino)methyl)-7-deazaguanosine). The polypeptide is Queuine tRNA-ribosyltransferase (Staphylococcus haemolyticus (strain JCSC1435)).